Here is a 291-residue protein sequence, read N- to C-terminus: Oxidative stress-responsive serine-rich protein 1 (291 aa).

The interval 44–139 is disordered; sequence RTTVDDTKPK…STGENSTSLD (96 aa). Over residues 65–83 the composition is skewed to basic residues; sequence STRKSSRGAVRIQRRRRSK. 2 stretches are compositionally biased toward polar residues: residues 95–113 and 127–139; these read CSTT…SQTE and KEFS…TSLD. At threonine 143 the chain carries Phosphothreonine.

In terms of tissue distribution, ubiquitous with high level in testis, placenta and cardiac myocytes. Expressed in testis, unpreganant uterus and cardiac myocytes.

The sequence is that of Oxidative stress-responsive serine-rich protein 1 (Oser1) from Rattus norvegicus (Rat).